A 165-amino-acid polypeptide reads, in one-letter code: MKNKLIAKSLLTLAAIGITTTTIASTADASEGYGPREKKPVSINHNIVEYNDGTFKYQSRPKFNSTPKYIKFKHDYNILEFNDGTFEYGARPQFNKPAAKTDATIKKEQKLIQAQNLVREFEKTHTVSAHRKAQKAVNLVSFEYKVKKMVLQERIDNVLKQGLVK.

Positions 1-29 are cleaved as a signal peptide; the sequence is MKNKLIAKSLLTLAAIGITTTTIASTADA.

As to quaternary structure, interacts with host fibrinogen alpha chain/FGA. Interacts with host complement protein C3.

The protein localises to the secreted. Its function is as follows. Extracellular fibrinogen-binding protein that plays an important role in virulence. By interacting with the alpha chain of fibrinogen and its derivative fibrin, enhances a non-functional interaction between fibrinogen and platelets and is responsible for repression of fibrinogen-dependent platelet aggregation. In addition, assembles a fibrinogen protective shield around the bacteria which results in impaired phagocytic clearance by the host. Mechanistically, interacts with host complement C3b deposited on the surface of the bacterium via its C-terminal and then recruits fibrinogen via its N-terminal. The polypeptide is Fibrinogen-binding protein (fib) (Staphylococcus aureus (strain Newman)).